A 331-amino-acid chain; its full sequence is MTETYDITIIGGGPAGMFAAFYAGMHNAKTQLLESLSELGGQVNALYPEKTILDVAGLPAINGRDLIKAQREQLTQFPLTIKTGQEVTNVTANEVGFTVTTDAGTTQTTAIIVAIGNGAFAPRPLTVPGAEAATGKQLVYSVPRLADFQDQTVMVAGGGDAAIDQALMLEPVAKSVTLLHRRAQFRGLAHMVDLLHASTVAVKTPYLIREVAPTATGQLKVTLKEVGSQTATAEQIVDKLVVSYGYTSDHHTLAGWDIDLAETRNLINVSQTMETSVPGIYAIGDGVTYPGKQPLIATGYGEAPVAVQSIMTQFFPDRRGPMHSTSLTPQS.

FAD is bound by residues glutamate 34, glutamine 42, tyrosine 47, valine 87, phenylalanine 120, aspartate 285, and threonine 325.

This sequence belongs to the ferredoxin--NADP reductase type 2 family. Homodimer. It depends on FAD as a cofactor.

The enzyme catalyses 2 reduced [2Fe-2S]-[ferredoxin] + NADP(+) + H(+) = 2 oxidized [2Fe-2S]-[ferredoxin] + NADPH. The sequence is that of Ferredoxin--NADP reductase from Levilactobacillus brevis (strain ATCC 367 / BCRC 12310 / CIP 105137 / JCM 1170 / LMG 11437 / NCIMB 947 / NCTC 947) (Lactobacillus brevis).